The chain runs to 353 residues: Farnesyl pyrophosphate synthase (353 aa).

Lys-57, Arg-60, and Gln-96 together coordinate isopentenyl diphosphate. Lys-57 is modified (N6-(2-hydroxyisobutyryl)lysine; alternate). N6-acetyllysine; alternate is present on Lys-57. Mg(2+) contacts are provided by Asp-103 and Asp-107. Dimethylallyl diphosphate is bound at residue Arg-112. Arg-113 contacts isopentenyl diphosphate. Residues Lys-200, Thr-201, Gln-240, Lys-257, and Lys-266 each coordinate dimethylallyl diphosphate.

The protein belongs to the FPP/GGPP synthase family. Homodimer. Interacts with RSAD2. Interacts with bovine leukemia virus (BLV) protein G4. Requires Mg(2+) as cofactor.

It is found in the cytoplasm. The catalysed reaction is isopentenyl diphosphate + dimethylallyl diphosphate = (2E)-geranyl diphosphate + diphosphate. It carries out the reaction isopentenyl diphosphate + (2E)-geranyl diphosphate = (2E,6E)-farnesyl diphosphate + diphosphate. It functions in the pathway isoprenoid biosynthesis; farnesyl diphosphate biosynthesis; farnesyl diphosphate from geranyl diphosphate and isopentenyl diphosphate: step 1/1. Its pathway is isoprenoid biosynthesis; geranyl diphosphate biosynthesis; geranyl diphosphate from dimethylallyl diphosphate and isopentenyl diphosphate: step 1/1. With respect to regulation, inactivated by interferon-induced RSAD2. This inactivation may result of disruption of lipid rafts at the plasma membrane, and thus have an antiviral effect since many enveloped viruses need lipid rafts to bud efficiently out of the cell. Its function is as follows. Key enzyme in isoprenoid biosynthesis which catalyzes the formation of farnesyl diphosphate (FPP), a precursor for several classes of essential metabolites including sterols, dolichols, carotenoids, and ubiquinones. FPP also serves as substrate for protein farnesylation and geranylgeranylation. Catalyzes the sequential condensation of isopentenyl pyrophosphate with the allylic pyrophosphates, dimethylallyl pyrophosphate, and then with the resultant geranylpyrophosphate to the ultimate product farnesyl pyrophosphate. The chain is Farnesyl pyrophosphate synthase (FDPS) from Bos taurus (Bovine).